Here is a 395-residue protein sequence, read N- to C-terminus: Probable G-protein coupled receptor npr-29 (395 aa).

Helical transmembrane passes span 38-58, 66-86, 89-109, and 148-168; these read VVGF…LFAP, ILFY…AMLL, IELV…YLIF, and AIIQ…PVFA. The N-linked (GlcNAc...) asparagine glycan is linked to N180. The next 3 membrane-spanning stretches (helical) occupy residues 202-222, 252-272, and 287-307; these read FWFN…GIIY, VITT…PYWV, and IIII…AYPL.

The protein belongs to the G-protein coupled receptor 1 family.

Its subcellular location is the cell membrane. Its function is as follows. Not known. Putative receptor. In Caenorhabditis elegans, this protein is Probable G-protein coupled receptor npr-29.